The primary structure comprises 555 residues: HERV-H_2q24.1 provirus ancestral Env polyprotein (555 aa).

Residues 1–35 form the signal peptide; it reads MILAGRAPSNTSTLMKFYSLLLYSLLFSFPFLYHP. Residues 36–515 are Extracellular-facing; it reads LPLPSYLHHT…WALSNWMSWV (480 aa). N-linked (GlcNAc...) asparagine glycosylation occurs at asparagine 47. Residues 64-67 carry the CXXC motif; the sequence is CWLC. N-linked (GlcNAc...) asparagine glycans are attached at residues asparagine 222, asparagine 265, asparagine 283, asparagine 352, and asparagine 370. The interval 388 to 408 is fusion peptide; it reads VIPLIPLMVGLGLSASTIALS. Asparagine 475 is a glycosylation site (N-linked (GlcNAc...) asparagine). A helical transmembrane segment spans residues 516 to 536; that stretch reads LPILSPLIPIFLLLLFGPCIF. Over 537–555 the chain is Cytoplasmic; it reads HLVSQFIQNRIQAITNHSI.

Belongs to the gamma type-C retroviral envelope protein family. HERV class-I H env subfamily. As to quaternary structure, the surface (SU) and transmembrane (TM) proteins form a heterodimer. SU and TM are attached by noncovalent interactions or by a labile interchain disulfide bond. Specific enzymatic cleavages in vivo yield the mature SU and TM proteins. In terms of tissue distribution, low expression in testis.

It localises to the virion. Its subcellular location is the cell membrane. In terms of biological role, retroviral envelope proteins mediate receptor recognition and membrane fusion during early infection. Endogenous envelope proteins may have kept, lost or modified their original function during evolution. This endogenous envelope protein has lost its original fusogenic properties. Its function is as follows. SU mediates receptor recognition. TM anchors the envelope heterodimer to the viral membrane through one transmembrane domain. The other hydrophobic domain, called fusion peptide, mediates fusion of the viral membrane with the target cell membrane. This is HERV-H_2q24.1 provirus ancestral Env polyprotein from Homo sapiens (Human).